The chain runs to 141 residues: Hemoglobin subunit alpha-A (141 aa).

The Globin domain maps to 1–141 (VLSAADKTNV…VSTVLTAKYR (141 aa)). Residue His-58 participates in O2 binding. A heme b-binding site is contributed by His-87.

The protein belongs to the globin family. Heterotetramer of two alpha chains and two beta chains. In terms of tissue distribution, red blood cells.

Functionally, involved in oxygen transport from the lung to the various peripheral tissues. The polypeptide is Hemoglobin subunit alpha-A (HBAA) (Eudynamys scolopaceus (Western koel)).